We begin with the raw amino-acid sequence, 133 residues long: uncharacterized protein (133 aa).

This is an uncharacterized protein from Saccharomyces cerevisiae (strain ATCC 204508 / S288c) (Baker's yeast).